The following is a 945-amino-acid chain: Bifunctional glutamine synthetase adenylyltransferase/adenylyl-removing enzyme (945 aa).

The interval 1–441 (MLPLSAALQT…VFNDLIGDDS (441 aa)) is adenylyl removase. The segment at 450-945 (YQHYHSLWQD…VRASWAKWLG (496 aa)) is adenylyl transferase.

It belongs to the GlnE family. The cofactor is Mg(2+).

It catalyses the reaction [glutamine synthetase]-O(4)-(5'-adenylyl)-L-tyrosine + phosphate = [glutamine synthetase]-L-tyrosine + ADP. The enzyme catalyses [glutamine synthetase]-L-tyrosine + ATP = [glutamine synthetase]-O(4)-(5'-adenylyl)-L-tyrosine + diphosphate. Its function is as follows. Involved in the regulation of glutamine synthetase GlnA, a key enzyme in the process to assimilate ammonia. When cellular nitrogen levels are high, the C-terminal adenylyl transferase (AT) inactivates GlnA by covalent transfer of an adenylyl group from ATP to specific tyrosine residue of GlnA, thus reducing its activity. Conversely, when nitrogen levels are low, the N-terminal adenylyl removase (AR) activates GlnA by removing the adenylyl group by phosphorolysis, increasing its activity. The regulatory region of GlnE binds the signal transduction protein PII (GlnB) which indicates the nitrogen status of the cell. This is Bifunctional glutamine synthetase adenylyltransferase/adenylyl-removing enzyme from Serratia proteamaculans (strain 568).